A 177-amino-acid polypeptide reads, in one-letter code: Retrograde regulation protein 1 (177 aa).

The tract at residues 1–24 (MSSIPAGTDPGSCGANFKNDRKRR) is disordered. One can recognise a bHLH domain in the interval 11–96 (GSCGANFKND…TQAVEYISHL (86 aa)). Phosphoserine occurs at positions 50 and 52. Disordered stretches follow at residues 52–82 (SNDT…KPNK) and 147–177 (LAAT…GNGS). Thr-60 bears the Phosphothreonine mark. Residues 168-177 (GGYGEYGNGS) show a composition bias toward gly residues.

As to quaternary structure, binds DNA as a heterodimer with RTG3.

Its subcellular location is the nucleus. Functionally, required for a novel path of interorganelle communication between mitochondria, peroxisomes and the nucleus, thereby maintaining a functional metabolic interaction between the tricarboxylic acid and glyoxylate cycles. Transcription factor that regulates CIT2 gene expression. Binds to two identical sites oriented as inverted repeats 28 bp apart in a regulatory upstream activation sequence element (UASR) in the CIT2 promoter. The core binding site is 5'-GGTCAC-3'. The protein is Retrograde regulation protein 1 (RTG1) of Saccharomyces cerevisiae (strain ATCC 204508 / S288c) (Baker's yeast).